We begin with the raw amino-acid sequence, 303 residues long: MASLKDLRDRIASVKATQKITKAMQMVAAARLHRAQEAAHSARPYAKRMAAILANLANDVDPIDAPSLMRGTGRDDVHLLVVCTAERGLCGAFNVQIARRAREHIKTLLAAGKIVKVLTVGKKGADILSRDYKALMIDHIDLQSIKRVGFAEAAMISQKIVDLFDDDAFDVCTLFYSEFVSVINQRPVAFGLVPMVSSGGAVETAEVEQKIDNSADLQSIVYDYEPDAASLLDVLVPRNLSVQIFRALLENVAGEMGAKMTAMDNASRNAGEMINKLTVAYNRQRQAQITTELIEIIAGAEAL.

Belongs to the ATPase gamma chain family. As to quaternary structure, F-type ATPases have 2 components, CF(1) - the catalytic core - and CF(0) - the membrane proton channel. CF(1) has five subunits: alpha(3), beta(3), gamma(1), delta(1), epsilon(1). CF(0) has three main subunits: a, b and c.

Its subcellular location is the cell inner membrane. Its function is as follows. Produces ATP from ADP in the presence of a proton gradient across the membrane. The gamma chain is believed to be important in regulating ATPase activity and the flow of protons through the CF(0) complex. This chain is ATP synthase gamma chain, found in Bartonella henselae (strain ATCC 49882 / DSM 28221 / CCUG 30454 / Houston 1) (Rochalimaea henselae).